The chain runs to 668 residues: DNA-directed RNA polymerase subunit beta' (668 aa).

Zn(2+) contacts are provided by C71, C73, C91, and C94. 3 residues coordinate Mg(2+): D505, D507, and D509.

Belongs to the RNA polymerase beta' chain family. RpoC1 subfamily. In plastids the minimal PEP RNA polymerase catalytic core is composed of four subunits: alpha, beta, beta', and beta''. When a (nuclear-encoded) sigma factor is associated with the core the holoenzyme is formed, which can initiate transcription. It depends on Mg(2+) as a cofactor. The cofactor is Zn(2+).

The protein resides in the plastid. It is found in the chloroplast. It catalyses the reaction RNA(n) + a ribonucleoside 5'-triphosphate = RNA(n+1) + diphosphate. Functionally, DNA-dependent RNA polymerase catalyzes the transcription of DNA into RNA using the four ribonucleoside triphosphates as substrates. The sequence is that of DNA-directed RNA polymerase subunit beta' from Mesostigma viride (Green alga).